The following is a 61-amino-acid chain: Ferredoxin (61 aa).

The 4Fe-4S ferredoxin-type domain occupies 2-28 (LYITEECTYCGACEPECPTNAISAGSE). [4Fe-4S] cluster contacts are provided by Cys-8, Cys-11, Cys-14, Cys-18, Cys-37, Cys-40, Cys-49, and Cys-53.

Requires [4Fe-4S] cluster as cofactor.

In terms of biological role, ferredoxins are iron-sulfur proteins that transfer electrons in a wide variety of metabolic reactions. The chain is Ferredoxin from Chlorobaculum thiosulfatiphilum (Chlorobium limicola f.sp. thiosulfatophilum).